Here is a 122-residue protein sequence, read N- to C-terminus: Large ribosomal subunit protein uL14 (122 aa).

This sequence belongs to the universal ribosomal protein uL14 family. Part of the 50S ribosomal subunit. Forms a cluster with proteins L3 and L19. In the 70S ribosome, L14 and L19 interact and together make contacts with the 16S rRNA in bridges B5 and B8.

In terms of biological role, binds to 23S rRNA. Forms part of two intersubunit bridges in the 70S ribosome. The protein is Large ribosomal subunit protein uL14 of Rhizobium johnstonii (strain DSM 114642 / LMG 32736 / 3841) (Rhizobium leguminosarum bv. viciae).